The chain runs to 899 residues: Receptor-like protein kinase At3g21340 (899 aa).

The first 27 residues, 1-27 (MEYHPQAIRLCALIFISFYALLHLVEA), serve as a signal peptide directing secretion. Residues 28 to 522 (QDQKGFISLD…GAKKMNVVIP (495 aa)) lie on the Extracellular side of the membrane. N-linked (GlcNAc...) asparagine glycosylation is found at Asn100, Asn146, Asn185, Asn240, Asn266, Asn420, Asn436, Asn449, Asn468, and Asn475. LRR repeat units lie at residues 415–438 (IVTS…QNLT), 439–461 (HLQE…LADI), and 463–485 (SLLV…LLQK). The chain crosses the membrane as a helical span at residues 523–543 (IVASVAFVVVLGSALAFFFIF). Over 544 to 899 (KKKKTSNSQD…FDIGATPDAR (356 aa)) the chain is Cytoplasmic. Thr583 bears the Phosphothreonine mark. Residues 592 to 865 (NNFERVLGKG…QVVIELNECL (274 aa)) enclose the Protein kinase domain. Residues 598 to 606 (LGKGGFGMV) and Lys620 each bind ATP. Tyr665 is modified (phosphotyrosine). Asp717 (proton acceptor) is an active-site residue. Phosphoserine is present on Ser751. Phosphothreonine is present on residues Thr752 and Thr757. Residue Tyr765 is modified to Phosphotyrosine.

It belongs to the protein kinase superfamily. Ser/Thr protein kinase family. Autophosphorylated on Tyr and Thr residues.

The protein localises to the cell membrane. The catalysed reaction is L-seryl-[protein] + ATP = O-phospho-L-seryl-[protein] + ADP + H(+). The enzyme catalyses L-threonyl-[protein] + ATP = O-phospho-L-threonyl-[protein] + ADP + H(+). It catalyses the reaction L-tyrosyl-[protein] + ATP = O-phospho-L-tyrosyl-[protein] + ADP + H(+). Its function is as follows. Probable receptor with a dual specificity kinase activity acting on both serine/threonine- and tyrosine-containing substrates. This is Receptor-like protein kinase At3g21340 from Arabidopsis thaliana (Mouse-ear cress).